A 379-amino-acid polypeptide reads, in one-letter code: Putative thylakoid lumen peptidyl-prolyl cis-trans isomerase sll0408 (379 aa).

The N-terminal stretch at 1 to 33 (MQIIKTPLGIITRRGLQLSLLSLLLTMLSLTWA) is a signal peptide. One can recognise a PPIase cyclophilin-type domain in the interval 190 to 378 (GRATVEMTTN…SGADNLVNGN (189 aa)).

The protein resides in the cellular thylakoid lumen. It carries out the reaction [protein]-peptidylproline (omega=180) = [protein]-peptidylproline (omega=0). Functionally, PPIases accelerate the folding of proteins. It catalyzes the cis-trans isomerization of proline imidic peptide bonds in oligopeptides. Required for the assembly and stabilization of PSII. This Synechocystis sp. (strain ATCC 27184 / PCC 6803 / Kazusa) protein is Putative thylakoid lumen peptidyl-prolyl cis-trans isomerase sll0408.